A 354-amino-acid chain; its full sequence is Fructose-bisphosphate aldolase (354 aa).

D-glyceraldehyde 3-phosphate is bound at residue Ser50. Asp83 functions as the Proton donor in the catalytic mechanism. Residues His84, Asp105, Glu142, and His198 each coordinate Zn(2+). Gly199 is a dihydroxyacetone phosphate binding site. A Zn(2+)-binding site is contributed by His232. Dihydroxyacetone phosphate is bound by residues 233–235 (GSS) and 275–278 (NIDT).

The protein belongs to the class II fructose-bisphosphate aldolase family. Zn(2+) serves as cofactor.

The catalysed reaction is beta-D-fructose 1,6-bisphosphate = D-glyceraldehyde 3-phosphate + dihydroxyacetone phosphate. The protein operates within carbohydrate degradation; glycolysis; D-glyceraldehyde 3-phosphate and glycerone phosphate from D-glucose: step 4/4. Functionally, catalyzes the aldol condensation of dihydroxyacetone phosphate (DHAP or glycerone-phosphate) with glyceraldehyde 3-phosphate (G3P) to form fructose 1,6-bisphosphate (FBP) in gluconeogenesis and the reverse reaction in glycolysis. In Stutzerimonas stutzeri (Pseudomonas stutzeri), this protein is Fructose-bisphosphate aldolase (fba).